We begin with the raw amino-acid sequence, 181 residues long: MNINKSNLIWLDLEMTGLEPETDKILEIATVVTDADLNILAEGPTIAIHQSNELLDNMDEWCTTQHGKSGLTARCKASTYDEAYAVEQTIAFLKQWVPAGASPMCGNSIGQDRRFMNKYMRELEDFFHYRNLDVSTIKELARRWKPEVLAQVNKKGSHLALDDIKDSIMELKVYREKFFNL.

Residues 8–171 form the Exonuclease domain; it reads LIWLDLEMTG…DDIKDSIMEL (164 aa). Tyr129 is an active-site residue.

Belongs to the oligoribonuclease family.

The protein localises to the cytoplasm. 3'-to-5' exoribonuclease specific for small oligoribonucleotides. This Pseudoalteromonas translucida (strain TAC 125) protein is Oligoribonuclease.